A 635-amino-acid chain; its full sequence is Threonine--tRNA ligase (635 aa).

The region spanning 1–58 (MIHVTCNQEAFELPEGASAMDLANKMKQSHCFAGALINDQEKDLSTTLQDGDTVLFLT) is the TGS domain. The segment at 237–528 (DHRVLGTKLD…LIEHFKGRFP (292 aa)) is catalytic. Cys-328, His-379, and His-505 together coordinate Zn(2+).

This sequence belongs to the class-II aminoacyl-tRNA synthetase family. As to quaternary structure, homodimer. The cofactor is Zn(2+).

Its subcellular location is the cytoplasm. It catalyses the reaction tRNA(Thr) + L-threonine + ATP = L-threonyl-tRNA(Thr) + AMP + diphosphate + H(+). Functionally, catalyzes the attachment of threonine to tRNA(Thr) in a two-step reaction: L-threonine is first activated by ATP to form Thr-AMP and then transferred to the acceptor end of tRNA(Thr). Also edits incorrectly charged L-seryl-tRNA(Thr). The protein is Threonine--tRNA ligase of Chlamydia trachomatis serovar A (strain ATCC VR-571B / DSM 19440 / HAR-13).